Here is a 203-residue protein sequence, read N- to C-terminus: Pyrrolidone-carboxylate peptidase (203 aa).

Active-site residues include Glu-78, Cys-141, and His-165.

This sequence belongs to the peptidase C15 family. In terms of assembly, homotetramer.

Its subcellular location is the cytoplasm. The catalysed reaction is Release of an N-terminal pyroglutamyl group from a polypeptide, the second amino acid generally not being Pro.. In terms of biological role, removes 5-oxoproline from various penultimate amino acid residues except L-proline. In Thermoanaerobacter pseudethanolicus (strain ATCC 33223 / 39E) (Clostridium thermohydrosulfuricum), this protein is Pyrrolidone-carboxylate peptidase.